The following is a 302-amino-acid chain: UDP-N-acetylenolpyruvoylglucosamine reductase (302 aa).

In terms of domain architecture, FAD-binding PCMH-type spans 27–192 (KTGGPADYVA…VSVTFGLKPG (166 aa)). Residue arginine 171 is part of the active site. The active-site Proton donor is the serine 221. Residue glutamate 291 is part of the active site.

Belongs to the MurB family. FAD serves as cofactor.

It is found in the cytoplasm. It carries out the reaction UDP-N-acetyl-alpha-D-muramate + NADP(+) = UDP-N-acetyl-3-O-(1-carboxyvinyl)-alpha-D-glucosamine + NADPH + H(+). Its pathway is cell wall biogenesis; peptidoglycan biosynthesis. Cell wall formation. The chain is UDP-N-acetylenolpyruvoylglucosamine reductase from Lactiplantibacillus plantarum (strain ATCC BAA-793 / NCIMB 8826 / WCFS1) (Lactobacillus plantarum).